We begin with the raw amino-acid sequence, 126 residues long: Large ribosomal subunit protein bL17 (126 aa).

Belongs to the bacterial ribosomal protein bL17 family. In terms of assembly, part of the 50S ribosomal subunit. Contacts protein L32.

The chain is Large ribosomal subunit protein bL17 from Xylella fastidiosa (strain M12).